The chain runs to 284 residues: MSMLPSFGFTQEQVACVCEVLQQGGNLERLGRFLWSLPACDHLHKNESVLKAKAVVAFHRGNFRELYKILESHQFSPHNHPKLQQLWLKAHYVEAEKLRGRPLGAVGKYRVRRKFPLPRTIWDGEETSYCFKEKSRGVLREWYAHNPYPSPREKRELAEATGLTTTQVSNWFKNRRQRDRAAEAKERENTENNNSSSNKQNQLSPLEGGKPLMSSSEEEFSPPQSPDQNSVLLLQGNMGHARSSNYSLPGLTASQPSHGLQTHQHQLQDSLLGPLTSSLVDLGS.

A DNA-binding region (homeobox) is located at residues 124 to 183 (GEETSYCFKEKSRGVLREWYAHNPYPSPREKRELAEATGLTTTQVSNWFKNRRQRDRAAE). A disordered region spans residues 168–269 (VSNWFKNRRQ…LQTHQHQLQD (102 aa)). The span at 179-190 (DRAAEAKERENT) shows a compositional bias: basic and acidic residues. The segment covering 242–269 (RSSNYSLPGLTASQPSHGLQTHQHQLQD) has biased composition (polar residues).

It belongs to the SIX/Sine oculis homeobox family. Interacts with DACH1. Interacts with EYA1. Interacts with EYA2. Interacts with CDH1. Interacts with TBX18. Interacts with CEBPA. Interacts with CEBPB. Interacts with EBF2. Phosphorylated during interphase; becomes hyperphosphorylated during mitosis. Hyperphosphorylation impairs binding to promoter elements. Post-translationally, ubiquitinated by the anaphase promoting complex (APC), leading to its proteasomal degradation. Specifically expressed in skeletal muscle.

It localises to the nucleus. The protein localises to the cytoplasm. Transcription factor that is involved in the regulation of cell proliferation, apoptosis and embryonic development. Plays an important role in the development of several organs, including kidney, muscle and inner ear. Depending on context, functions as a transcriptional repressor or activator. Lacks an activation domain, and requires interaction with EYA family members for transcription activation. Mediates nuclear translocation of EYA1 and EYA2. Binds the 5'-TCA[AG][AG]TTNC-3' motif present in the MEF3 element in the MYOG promoter and CIDEA enhancer. Regulates the expression of numerous genes, including MYC, CCND1 and EZR. Acts as an activator of the IGFBP5 promoter, probably coactivated by EYA2. Repression of precursor cell proliferation in myoblasts is switched to activation through recruitment of EYA3 to the SIX1-DACH1 complex. During myogenesis, seems to act together with EYA2 and DACH2. Regulates the expression of CCNA1. Promotes brown adipocyte differentiation. The sequence is that of Homeobox protein SIX1 (SIX1) from Homo sapiens (Human).